We begin with the raw amino-acid sequence, 130 residues long: MSATQNYGTGRRKTATARVFLRPGTGKISINNRGLDQFFGRETARMVVRQPLELTETVEKFDIFVTVVGGGVSGQAGAIRHGITRALIEYDETLRSSLRKAGYVTRDAREVERKKVGLRKARKRPQYSKR.

Belongs to the universal ribosomal protein uS9 family.

In Pseudomonas aeruginosa (strain LESB58), this protein is Small ribosomal subunit protein uS9.